Here is a 408-residue protein sequence, read N- to C-terminus: Argininosuccinate synthase (408 aa).

Residues 10–18 and A37 each bind ATP; that span reads AYSGGLDTS. Residues Y90 and S95 each coordinate L-citrulline. ATP is bound at residue G120. L-aspartate is bound by residues T122, N126, and D127. Residue N126 coordinates L-citrulline. Residues R130, S182, S191, E267, and Y279 each coordinate L-citrulline.

This sequence belongs to the argininosuccinate synthase family. Type 1 subfamily. As to quaternary structure, homotetramer.

It is found in the cytoplasm. It carries out the reaction L-citrulline + L-aspartate + ATP = 2-(N(omega)-L-arginino)succinate + AMP + diphosphate + H(+). The protein operates within amino-acid biosynthesis; L-arginine biosynthesis; L-arginine from L-ornithine and carbamoyl phosphate: step 2/3. This chain is Argininosuccinate synthase, found in Paraburkholderia phytofirmans (strain DSM 17436 / LMG 22146 / PsJN) (Burkholderia phytofirmans).